The sequence spans 20 residues: Cytosol aminopeptidase (20 aa).

A Phosphoserine modification is found at serine 6.

It belongs to the peptidase M17 family. Homohexamer. It depends on Zn(2+) as a cofactor. The cofactor is Mn(2+).

It is found in the cytoplasm. The catalysed reaction is Release of an N-terminal amino acid, Xaa-|-Yaa-, in which Xaa is preferably Leu, but may be other amino acids including Pro although not Arg or Lys, and Yaa may be Pro. Amino acid amides and methyl esters are also readily hydrolyzed, but rates on arylamides are exceedingly low.. The enzyme catalyses an S-substituted L-cysteinylglycine + H2O = an S-substituted L-cysteine + glycine. It catalyses the reaction L-cysteinylglycine + H2O = L-cysteine + glycine. It carries out the reaction S-benzyl-L-cysteinylglycine + H2O = S-benzyl-L-cysteine + glycine. The catalysed reaction is Release of N-terminal proline from a peptide.. Functionally, cytosolic metallopeptidase that catalyzes the removal of unsubstituted N-terminal hydrophobic amino acids from various peptides. The presence of Zn(2+) ions is essential for the peptidase activity, and the association with other cofactors can modulate the substrate spectificity of the enzyme. For instance, in the presence of Mn(2+), it displays a specific Cys-Gly hydrolyzing activity of Cys-Gly-S-conjugates. Involved in the metabolism of glutathione and in the degradation of glutathione S-conjugates, which may play a role in the control of the cell redox status. The chain is Cytosol aminopeptidase from Mesocricetus auratus (Golden hamster).